The sequence spans 947 residues: Glutamate receptor 2.8 (947 aa).

A signal peptide spans 1–26; that stretch reads MNPKKNNNTFLSYFVCLFLLLEVGLG. Residues 27 to 577 lie on the Extracellular side of the membrane; the sequence is QNQISEIKVG…NTWVFLKPWG (551 aa). N-linked (GlcNAc...) asparagine glycosylation is found at asparagine 42, asparagine 118, asparagine 333, asparagine 341, asparagine 348, asparagine 420, asparagine 478, and asparagine 524. The helical transmembrane segment at 578–598 threads the bilayer; sequence LDLWVTTACFFVLIGFVVWLF. Over 599 to 607 the chain is Cytoplasmic; it reads EHRVNTDFR. The chain crosses the membrane as a helical span at residues 608–628; the sequence is GPPHHQIGTSFWFSFSTMVFA. Residues 629–632 are Cytoplasmic-facing; sequence HREK. Residues 633–653 traverse the membrane as a helical segment; it reads VVSNLARFVVVVWCFVVLVLT. The Extracellular portion of the chain corresponds to 654 to 819; the sequence is QSYTANLTSF…NRLSLRSFWG (166 aa). 4 N-linked (GlcNAc...) asparagine glycosylation sites follow: asparagine 659, asparagine 704, asparagine 723, and asparagine 779. A helical transmembrane segment spans residues 820–840; sequence LFLIAGIASFLALLIFVFLFL. At 841 to 947 the chain is on the cytoplasmic side; that stretch reads YENRHTLCDD…ESDIECVVEQ (107 aa).

The protein belongs to the glutamate-gated ion channel (TC 1.A.10.1) family. In terms of assembly, may form heteromers. In terms of tissue distribution, expressed predominantly in leaves.

The protein resides in the membrane. In terms of biological role, glutamate-gated receptor that probably acts as a non-selective cation channel. May be involved in light-signal transduction and calcium homeostasis via the regulation of calcium influx into cells. The sequence is that of Glutamate receptor 2.8 (GLR2.8) from Arabidopsis thaliana (Mouse-ear cress).